A 291-amino-acid polypeptide reads, in one-letter code: Elongation factor Ts (291 aa).

An involved in Mg(2+) ion dislocation from EF-Tu region spans residues 80–83 (TDFV).

Belongs to the EF-Ts family.

Its subcellular location is the cytoplasm. Functionally, associates with the EF-Tu.GDP complex and induces the exchange of GDP to GTP. It remains bound to the aminoacyl-tRNA.EF-Tu.GTP complex up to the GTP hydrolysis stage on the ribosome. This chain is Elongation factor Ts, found in Acinetobacter baumannii (strain AB307-0294).